Here is a 358-residue protein sequence, read N- to C-terminus: Methylthioribose-1-phosphate isomerase (358 aa).

Residues 54-56 (RGA), Arg96, and Gln205 each bind substrate. Asp246 (proton donor) is an active-site residue. 256 to 257 (NK) contacts substrate.

The protein belongs to the eIF-2B alpha/beta/delta subunits family. MtnA subfamily.

The enzyme catalyses 5-(methylsulfanyl)-alpha-D-ribose 1-phosphate = 5-(methylsulfanyl)-D-ribulose 1-phosphate. The protein operates within amino-acid biosynthesis; L-methionine biosynthesis via salvage pathway; L-methionine from S-methyl-5-thio-alpha-D-ribose 1-phosphate: step 1/6. Catalyzes the interconversion of methylthioribose-1-phosphate (MTR-1-P) into methylthioribulose-1-phosphate (MTRu-1-P). This Pseudomonas paraeruginosa (strain DSM 24068 / PA7) (Pseudomonas aeruginosa (strain PA7)) protein is Methylthioribose-1-phosphate isomerase.